The following is a 164-amino-acid chain: Dihydrofolate reductase (164 aa).

In terms of domain architecture, DHFR spans 2-162 (NISIIVAMSQ…FYVTFKILKK (161 aa)). Position 6–8 (6–8 (IVA)) interacts with substrate. NADP(+)-binding positions include 7–8 (VA) and 15–20 (IGQKNS). Position 28 (Asp28) interacts with substrate. Residue 44 to 47 (GRKT) coordinates NADP(+). Position 58 (Arg58) interacts with substrate. NADP(+) is bound by residues 63-66 (LTRQ) and 96-101 (IGGSNL). Thr115 is a substrate binding site.

This sequence belongs to the dihydrofolate reductase family.

It carries out the reaction (6S)-5,6,7,8-tetrahydrofolate + NADP(+) = 7,8-dihydrofolate + NADPH + H(+). It participates in cofactor biosynthesis; tetrahydrofolate biosynthesis; 5,6,7,8-tetrahydrofolate from 7,8-dihydrofolate: step 1/1. In terms of biological role, key enzyme in folate metabolism. Catalyzes an essential reaction for de novo glycine and purine synthesis, and for DNA precursor synthesis. The protein is Dihydrofolate reductase (folA) of Buchnera aphidicola subsp. Baizongia pistaciae (strain Bp).